We begin with the raw amino-acid sequence, 270 residues long: Orotidine 5'-phosphate decarboxylase (270 aa).

K89 acts as the Proton donor in catalysis.

This sequence belongs to the OMP decarboxylase family. Type 2 subfamily.

The catalysed reaction is orotidine 5'-phosphate + H(+) = UMP + CO2. The protein operates within pyrimidine metabolism; UMP biosynthesis via de novo pathway; UMP from orotate: step 2/2. The polypeptide is Orotidine 5'-phosphate decarboxylase (Dehalococcoides mccartyi (strain ATCC BAA-2100 / JCM 16839 / KCTC 5957 / BAV1)).